The following is a 2226-amino-acid chain: Histone-lysine N-methyltransferase ash1 (2226 aa).

Positions 1–145 are disordered; the sequence is MSCSQNETAA…SDSEDDLPLK (145 aa). Residues 32–52 are compositionally biased toward polar residues; the sequence is ITDQSSQSKSIKSATQFSVQR. Positions 99–111 are enriched in basic residues; sequence AVSKKVKVKRKKL. Residues serine 135, serine 136, and serine 138 each carry the phosphoserine modification. Residues threonine 200 and threonine 201 each carry the phosphothreonine modification. Residues 260 to 269 are compositionally biased toward basic residues; the sequence is PRKRRGRPKK. 5 disordered regions span residues 260–324, 343–367, 673–695, 711–749, and 811–832; these read PRKR…IASS, RVLY…SSNK, AQQL…KRGL, SASA…HKLP, and KRHL…SNSP. The a.T hook 1 DNA-binding region spans 261 to 273; it reads RKRRGRPKKVVPT. Residues 294-306 are compositionally biased toward low complexity; that stretch reads STTSTTQSTTPSP. The segment covering 307–324 has biased composition (polar residues); the sequence is KMQNENAVPTGSLPIASS. The segment covering 711–727 has biased composition (low complexity); that stretch reads SASASGTPNGSGSSNGN. A phosphoserine mark is found at serine 740, serine 831, and serine 977. A compositionally biased stretch (low complexity) spans 820 to 831; sequence SVSGAGSSASNS. 2 disordered regions span residues 980 to 1026 and 1049 to 1230; these read QQTT…DCER and SVVA…TTSL. Positions 989–999 are enriched in acidic residues; the sequence is HEPEFDPDDEP. 2 DNA-binding regions (a.T hook) span residues 1065 to 1077 and 1095 to 1107; these read GRPR…NREQ and AKKR…QPVL. The segment covering 1108 to 1117 has biased composition (pro residues); that stretch reads EEPPPTPPPQ. Basic and acidic residues predominate over residues 1186–1200; it reads AEAKRLDSIPTEHDP. The segment covering 1205–1219 has biased composition (polar residues); it reads ESHNPGPQDYASCSE. The region spanning 1339–1387 is the AWS domain; that stretch reads FDHPTCNCKNQGEKSCLDNCLNRMVYTECSPSNCPAGEKCRNQKIQRHA. Residues 1390-1506 enclose the SET domain; it reads PGVERFMTAD…EGEELTYDYN (117 aa). The Post-SET domain occupies 1514–1530; that stretch reads EGQPCRCNTPQCRGVIG. Disordered stretches follow at residues 1536 to 1575 and 1616 to 1648; these read VKPL…GKDI and RASD…SSPS. Positions 1556-1568 are enriched in basic residues; the sequence is GRQRKQKAKKHAQ. Composition is skewed to low complexity over residues 1619-1628 and 1639-1648; these read DAAATASSPA and RRPSTPSSPS. The Bromo domain occupies 1681-1789; the sequence is KMAVVLRDIC…DSYEQQKIAS (109 aa). Residues 1808-1839 are disordered; it reads PKEVLSSEEEPGKIAVKKSPGAKERDSPIVPL. The segment at 1857–1903 adopts a PHD-type zinc-finger fold; it reads VIRCICGLYKDEGLMIQCSKCMVWQHTECTKADIDADNYQCERCEPR. In terms of domain architecture, BAH spans 1952-2072; sequence KVLPTKKHTY…KTARFFSKAK (121 aa). The tract at residues 2205–2226 is disordered; it reads SGRGARQRKTQQSSSSSTANST. Positions 2214–2226 are enriched in low complexity; the sequence is TQQSSSSSTANST.

It belongs to the class V-like SAM-binding methyltransferase superfamily. Histone-lysine methyltransferase family. SET2 subfamily. Component of a large multiprotein complex distinct from complexes containing ash2 or brm. Interacts (via SET domain) with trx (via SET domain). Interacts with nej/cbp. In terms of tissue distribution, expressed throughout development but is present at higher levels during the embryonic and pupal stages than during the larval stages. During the larval stages it accumulates primarily in imaginal disks.

It is found in the nucleus. The protein resides in the chromosome. The enzyme catalyses L-lysyl(4)-[histone H3] + 3 S-adenosyl-L-methionine = N(6),N(6),N(6)-trimethyl-L-lysyl(4)-[histone H3] + 3 S-adenosyl-L-homocysteine + 3 H(+). Trithorax group (TrxG) protein that has histone methyltransferase activity. Specifically trimethylates 'Lys-4' of histone H3 (H3K4me3), a specific tag for epigenetic transcriptional activation. TrxG proteins are generally required to maintain the transcriptionally active state of homeotic genes throughout development. Does not act as a coactivator required for transcriptional activation, but specifically prevents inappropriate Polycomb Group (PcG) silencing of homeotic genes in cells in which they must stay transcriptionally active. This chain is Histone-lysine N-methyltransferase ash1 (ash1), found in Drosophila melanogaster (Fruit fly).